The following is a 180-amino-acid chain: Crossover junction endodeoxyribonuclease RuvC (180 aa).

Catalysis depends on residues Asp-7, Glu-66, and Asp-138. Mg(2+) is bound by residues Asp-7, Glu-66, and Asp-138.

It belongs to the RuvC family. Homodimer which binds Holliday junction (HJ) DNA. The HJ becomes 2-fold symmetrical on binding to RuvC with unstacked arms; it has a different conformation from HJ DNA in complex with RuvA. In the full resolvosome a probable DNA-RuvA(4)-RuvB(12)-RuvC(2) complex forms which resolves the HJ. Mg(2+) serves as cofactor.

Its subcellular location is the cytoplasm. It carries out the reaction Endonucleolytic cleavage at a junction such as a reciprocal single-stranded crossover between two homologous DNA duplexes (Holliday junction).. Its function is as follows. The RuvA-RuvB-RuvC complex processes Holliday junction (HJ) DNA during genetic recombination and DNA repair. Endonuclease that resolves HJ intermediates. Cleaves cruciform DNA by making single-stranded nicks across the HJ at symmetrical positions within the homologous arms, yielding a 5'-phosphate and a 3'-hydroxyl group; requires a central core of homology in the junction. The consensus cleavage sequence is 5'-(A/T)TT(C/G)-3'. Cleavage occurs on the 3'-side of the TT dinucleotide at the point of strand exchange. HJ branch migration catalyzed by RuvA-RuvB allows RuvC to scan DNA until it finds its consensus sequence, where it cleaves and resolves the cruciform DNA. The sequence is that of Crossover junction endodeoxyribonuclease RuvC from Paraburkholderia phymatum (strain DSM 17167 / CIP 108236 / LMG 21445 / STM815) (Burkholderia phymatum).